Here is a 424-residue protein sequence, read N- to C-terminus: Histidinol dehydrogenase (424 aa).

NAD(+) is bound by residues Tyr-127, Gln-188, and Asn-211. Substrate contacts are provided by Ser-234, Gln-256, and His-259. Positions 256 and 259 each coordinate Zn(2+). Residues Glu-322 and His-323 each act as proton acceptor in the active site. The substrate site is built by His-323, Asp-356, Glu-410, and His-415. Asp-356 contributes to the Zn(2+) binding site. A Zn(2+)-binding site is contributed by His-415.

This sequence belongs to the histidinol dehydrogenase family. Zn(2+) is required as a cofactor.

The catalysed reaction is L-histidinol + 2 NAD(+) + H2O = L-histidine + 2 NADH + 3 H(+). It participates in amino-acid biosynthesis; L-histidine biosynthesis; L-histidine from 5-phospho-alpha-D-ribose 1-diphosphate: step 9/9. Functionally, catalyzes the sequential NAD-dependent oxidations of L-histidinol to L-histidinaldehyde and then to L-histidine. The chain is Histidinol dehydrogenase from Methanococcus maripaludis (strain DSM 14266 / JCM 13030 / NBRC 101832 / S2 / LL).